A 368-amino-acid chain; its full sequence is Homoserine O-acetyltransferase (368 aa).

The region spanning 41 to 352 (NVILITHALS…DYGHDSFLVE (312 aa)) is the AB hydrolase-1 domain. The active-site Nucleophile is the serine 147. Substrate is bound at residue arginine 219. Active-site residues include aspartate 313 and histidine 346. Aspartate 347 provides a ligand contact to substrate.

This sequence belongs to the AB hydrolase superfamily. MetX family. As to quaternary structure, homodimer.

The protein resides in the cytoplasm. The enzyme catalyses L-homoserine + acetyl-CoA = O-acetyl-L-homoserine + CoA. It functions in the pathway amino-acid biosynthesis; L-methionine biosynthesis via de novo pathway; O-acetyl-L-homoserine from L-homoserine: step 1/1. Functionally, transfers an acetyl group from acetyl-CoA to L-homoserine, forming acetyl-L-homoserine. The polypeptide is Homoserine O-acetyltransferase (Nautilia profundicola (strain ATCC BAA-1463 / DSM 18972 / AmH)).